Consider the following 119-residue polypeptide: Beta-2-microglobulin (119 aa).

Residues 1 to 20 (MARFVVVALLVQLSLFGLEA) form the signal peptide. Residues 25–114 (PKIQVYSRYP…VTFSTPKTVK (90 aa)) form the Ig-like C1-type domain. Cysteine 45 and cysteine 100 are oxidised to a cystine.

This sequence belongs to the beta-2-microglobulin family. In terms of assembly, heterodimer of an alpha chain and a beta chain. Beta-2-microglobulin is the beta-chain of major histocompatibility complex class I molecules.

It localises to the secreted. Component of the class I major histocompatibility complex (MHC). Involved in the presentation of peptide antigens to the immune system. The protein is Beta-2-microglobulin (B2M) of Saguinus imperator (Emperor tamarin).